A 489-amino-acid chain; its full sequence is MSNKAEKYSQLRTMIPEMRRVKHIYFVGIGGAGMGGIAEVLVNEGYKLSGSDIAQSAVTERLAQLGVTIYIGHDASQVKDVDVVVVSTAISADNPELVAAKELRIPVVRRAEMLAELMRYRHGVAVAGTHGKTTTTSLIASVYGQAERDPTFVIGGLLNSAGTNARLGHSRYLIAEADESDASFLHLQPMVSVVTNIEADHMDTYEGDLEKLKTTFVDFLHNLPFYGVAVVCIDDPIVRELIPRIGRRIVTYGFSEDADVRALDFKQTGYSCEFTVRRAGMDDLQLSVNLPGEHNVLNSLAAIAVATEDEIEDEAIITALADFQGIGRRFQQIGEFTTAKGEIKLVDDYGHHPSEVAATIKAARLGWPERRLVMIYQPHRYSRTRDLYEDFVEVLSQVDCLLMLDVYAAGEAPIPGADSRALCRSIRVRGQVEPVFVASTEQLETVLPEILQDGDLLLTQGAGSIGLLSRSLAESNLGFDSAVTDEKNA.

Residue 128 to 134 coordinates ATP; that stretch reads GTHGKTT.

The protein belongs to the MurCDEF family.

It is found in the cytoplasm. It carries out the reaction UDP-N-acetyl-alpha-D-muramate + L-alanine + ATP = UDP-N-acetyl-alpha-D-muramoyl-L-alanine + ADP + phosphate + H(+). Its pathway is cell wall biogenesis; peptidoglycan biosynthesis. Its function is as follows. Cell wall formation. The sequence is that of UDP-N-acetylmuramate--L-alanine ligase from Shewanella pealeana (strain ATCC 700345 / ANG-SQ1).